We begin with the raw amino-acid sequence, 178 residues long: Glucagon-2 (178 aa).

The N-terminal stretch at M1–A21 is a signal peptide. 3 consecutive propeptides follow at residues S83–S87, E123–S134, and S171–H178.

Belongs to the glucagon family.

The protein localises to the secreted. Its function is as follows. Promotes hydrolysis of glycogen and lipids, and raises the blood sugar level. This Oncorhynchus mykiss (Rainbow trout) protein is Glucagon-2 (gcg2).